The chain runs to 1311 residues: Zinc finger protein 521 (1311 aa).

The C2H2-type 1; degenerate zinc-finger motif lies at 47–67 (HSCDSCLQVFESLSDITEHKI). Residues 81–108 (DPSCSWPASSPSSKDQTSPSHGEGCDFG) form a disordered region. Positions 83–102 (SCSWPASSPSSKDQTSPSHG) are enriched in low complexity. 7 consecutive C2H2-type zinc fingers follow at residues 118–140 (YPCQ…EQSH), 146–168 (FKCT…IKLH), 174–196 (YHCS…LKTH), 202–224 (YKCA…MQVH), 246–269 (QKCS…AECH), 281–304 (LQCM…EQVH), and 310–332 (NSCS…MDSH). Residues 357–398 (TTPDSNLSVDSSTMVEAAPPIPKSRGRKRAAQQTSDMTGPSS) form a disordered region. 2 stretches are compositionally biased toward polar residues: residues 359–370 (PDSNLSVDSSTM) and 387–398 (AQQTSDMTGPSS). Residues 405–429 (YSCIYCNKQLFSSLAVLQIHLKTMH) form a C2H2-type 9; degenerate zinc finger. C2H2-type zinc fingers lie at residues 437-460 (HICQ…KQVH), 477-500 (YQCN…RCSH), and 513-536 (FFCP…RQVH). Ser-546 carries the post-translational modification Phosphoserine. The segment at 560 to 585 (YSCSYCTNSPIFNSVLKLNKHIKENH) adopts a C2H2-type 13; atypical zinc-finger fold. Phosphoserine occurs at positions 605 and 608. 7 consecutive C2H2-type zinc fingers follow at residues 634–656 (YICN…LKTH), 664–686 (LTCP…VTIH), 694–717 (YICE…LDMH), 722–745 (FRCT…AVKH), 752–775 (YRCT…KHNH), 783–805 (HKCI…ITTH), and 809–832 (YNCR…REKH). The tract at residues 863-883 (TNSQESHNSHDGSEEDVDSSE) is disordered. The segment at 886–908 (YGCDICGAAYTMETLLQNHQLRD) adopts a C2H2-type 21; degenerate zinc-finger fold. C2H2-type zinc fingers lie at residues 930–952 (YKCN…MQTH), 959–981 (YMCP…KVTH), and 1020–1042 (FRCV…GTFH). Residues 1065-1083 (YKCASCLKEFRSKQDLVKL) form a C2H2-type 25; degenerate zinc finger. The span at 1105-1119 (PGLSLPPGASRPGLG) shows a compositional bias: low complexity. Residues 1105 to 1136 (PGLSLPPGASRPGLGQNESLSAMEGKGKAGGL) are disordered. 5 C2H2-type zinc fingers span residues 1138–1161 (TRCS…QTVH), 1195–1217 (YQCI…VANH), 1225–1247 (HECK…LIEH), 1256–1279 (FKCP…FSAH), and 1286–1309 (YDCT…MTQH). Lys-1146 participates in a covalent cross-link: Glycyl lysine isopeptide (Lys-Gly) (interchain with G-Cter in SUMO2).

The protein belongs to the krueppel C2H2-type zinc-finger protein family. As to quaternary structure, interacts with EBF1. Interacts with SMAD1 and SMAD4. As to expression, widely expressed. Expressed in all B-cell stages.

The protein localises to the nucleus. Transcription factor that can both act as an activator or a repressor depending on the context. Involved in BMP signaling and in the regulation of the immature compartment of the hematopoietic system. Associates with SMADs in response to BMP2 leading to activate transcription of BMP target genes. Acts as a transcriptional repressor via its interaction with EBF1, a transcription factor involved specification of B-cell lineage; this interaction preventing EBF1 to bind DNA and activate target genes. This Mus musculus (Mouse) protein is Zinc finger protein 521 (Znf521).